Here is a 421-residue protein sequence, read N- to C-terminus: MGRIGILGAGLAGLAAATKLAEAGENVTVFEARNRPGGRVWSETLDTPKGSYVIERGAEFVLDGYTSMRRLLSQFGLSLVDTGMSYYVREPGDTTGITCDDIIRTGREALELASGSGLQGTAEELLAKLPDEPELVDALRARIEISTAVSASEVTARSLQHIASFEPKPSWRVAGGNQRLPDAMAAALGSAVRYGETVRAVENISDGGVLVTTDTDTSVFDTVVVALPLAVIRDSQLNLPTTEARDAALKHVLQGHAAKLHLPLETQPATSAVMSVEGRYWTWTATDESGAVAPVLNAFMGSPSAITRANLKQRPAEWVAKARALRTDLAIPQDAAALTTVWSEDQLAGGAYAAHAPGVTAAGTALLEKPVGDVFWAGEYSEPEFVGLMEGAIRSGERAAGRVMQRLETKSGNSDSERSKA.

FAD is bound by residues E31, R33, R39, and E379.

It belongs to the flavin monoamine oxidase family. In terms of assembly, monomer. FAD serves as cofactor.

The enzyme catalyses 4-(methylamino)butanoate + O2 + H2O = succinate semialdehyde + methylamine + H2O2. It participates in alkaloid degradation; nicotine degradation. Its function is as follows. Catalyzes the removal of methylamine from 4-methylaminobutanoate with the formation of succinate semialdehyde. Is involved in the catabolism of 4-methylaminobutanoate produced from nicotine. Has a very weak monoamine oxidase activity with 4-aminobutanoate. Cannot use spermidine, spermine, sarcosine, dimethylglycine, glycine, choline, betaine, alpha-methylamino isobutyrate, methylamine propionitrile and methylamino propylamine as substrate. This is 4-methylaminobutanoate oxidase (methylamine-forming) (mao) from Paenarthrobacter nicotinovorans (Arthrobacter nicotinovorans).